A 405-amino-acid polypeptide reads, in one-letter code: Deoxyguanosinetriphosphate triphosphohydrolase-like protein (405 aa).

An HD domain is found at 75 to 219 (RLTHTIEVAQ…AAIADDIAYN (145 aa)).

Belongs to the dGTPase family. Type 2 subfamily.

The protein is Deoxyguanosinetriphosphate triphosphohydrolase-like protein of Rhizobium leguminosarum bv. trifolii (strain WSM2304).